Consider the following 101-residue polypeptide: MIPGELFIQDGEIELNAGRKTVTISVANTGDRPIQVGSHYHFFETNPALKFDRKKARGMRLDIAAGTAVRFEPGQTRDVQLVALAGKRMVYGFRGDVMGKL.

The protein belongs to the urease beta subunit family. As to quaternary structure, heterotrimer of UreA (gamma), UreB (beta) and UreC (alpha) subunits. Three heterotrimers associate to form the active enzyme.

It is found in the cytoplasm. The enzyme catalyses urea + 2 H2O + H(+) = hydrogencarbonate + 2 NH4(+). It participates in nitrogen metabolism; urea degradation; CO(2) and NH(3) from urea (urease route): step 1/1. The polypeptide is Urease subunit beta (Bradyrhizobium sp. (strain ORS 278)).